The chain runs to 123 residues: Large ribosomal subunit protein uL24 (123 aa).

This sequence belongs to the universal ribosomal protein uL24 family. As to quaternary structure, part of the 50S ribosomal subunit.

Functionally, one of two assembly initiator proteins, it binds directly to the 5'-end of the 23S rRNA, where it nucleates assembly of the 50S subunit. Its function is as follows. Located at the polypeptide exit tunnel on the outside of the subunit. The polypeptide is Large ribosomal subunit protein uL24 (Pyrobaculum aerophilum (strain ATCC 51768 / DSM 7523 / JCM 9630 / CIP 104966 / NBRC 100827 / IM2)).